The primary structure comprises 120 residues: uncharacterized protein (120 aa).

Residues 93–109 (LCVGISTTMIIQVLFLL) form a helical membrane-spanning segment.

The protein localises to the membrane. This is an uncharacterized protein from Saccharomyces cerevisiae (strain ATCC 204508 / S288c) (Baker's yeast).